We begin with the raw amino-acid sequence, 615 residues long: Protein DlpA (615 aa).

Belongs to the isocitrate and isopropylmalate dehydrogenases family. It to M.jannaschii MJ0644 in the C-terminal section.

This is Protein DlpA (dlpA) from Legionella pneumophila subsp. pneumophila (strain Philadelphia 1 / ATCC 33152 / DSM 7513).